A 552-amino-acid chain; its full sequence is Carotenoid cleavage dioxygenase 8 homolog A, chloroplastic (552 aa).

A chloroplast-targeting transit peptide spans 1–43 (MATSLTLIATPCTAPRSSSSFALAPRLPPRCSNATAARRRAVR). Residues 32 to 73 (SNATAARRRAVRATTLQSDQEPAGSGDSGATTTKLSASTSVR) form a disordered region. Residues 59-72 (SGATTTKLSASTSV) show a composition bias toward polar residues. Histidine 239, histidine 289, histidine 356, and histidine 543 together coordinate Fe cation.

This sequence belongs to the carotenoid oxygenase family. Fe(2+) serves as cofactor. As to expression, highly expressed in panicles, inflorescences and parenchyma cells of the root stele, and at lower levels in shoot apex, leaf buds and xylem parenchyma cells of the stem.

It is found in the plastid. The protein localises to the chloroplast. Functionally, may be involved in strigolactones biosynthesis. In Oryza sativa subsp. japonica (Rice), this protein is Carotenoid cleavage dioxygenase 8 homolog A, chloroplastic (CCD8A).